A 256-amino-acid polypeptide reads, in one-letter code: DNA repair protein RecO (256 aa).

It belongs to the RecO family.

In terms of biological role, involved in DNA repair and RecF pathway recombination. In Streptococcus equi subsp. zooepidemicus (strain MGCS10565), this protein is DNA repair protein RecO.